A 117-amino-acid polypeptide reads, in one-letter code: Large ribosomal subunit protein uL18 (117 aa).

This sequence belongs to the universal ribosomal protein uL18 family. Part of the 50S ribosomal subunit; part of the 5S rRNA/L5/L18/L25 subcomplex. Contacts the 5S and 23S rRNAs.

Functionally, this is one of the proteins that bind and probably mediate the attachment of the 5S RNA into the large ribosomal subunit, where it forms part of the central protuberance. This is Large ribosomal subunit protein uL18 from Coxiella burnetii (strain CbuK_Q154) (Coxiella burnetii (strain Q154)).